The chain runs to 233 residues: Protease inhibitor Egf1.0 (233 aa).

The signal sequence occupies residues 1 to 28 (MYIDTGIMSNNIFLFAFFALVGLTRIEA). A TIL domain is found at 52–104 (CRENEHYNSTRIECEEECNDRNNKLCYRFQQFCWCNEGYIRNSSHICVKLEDC). Residues 201–233 (FGKPKNSSAEKKPLETETQAQKFNGIIDQETLD) form a disordered region.

Belongs to the polydnaviridae EGF-like motif protein family. As to quaternary structure, interacts with host PAP1 and PAP3.

Counteracts the host humoral immune response by inhibiting the processing and the amidolytic activity of host PAP3. Thereby, melanization of host hemolymph, normally producing several reactive intermediates toxic for viruses, is deregulated and proper immune response cannot occur. The chain is Protease inhibitor Egf1.0 (O12) from Microplitis demolitor (Parasitoid wasp).